Consider the following 475-residue polypeptide: Protein nucleotidyltransferase YdiU (475 aa).

Residues Gly-82, Gly-84, Arg-85, Lys-105, Asp-117, Gly-118, Arg-168, and Arg-175 each coordinate ATP. Asp-240 serves as the catalytic Proton acceptor. Mg(2+)-binding residues include Asn-241 and Asp-250. Residue Asp-250 coordinates ATP.

Belongs to the SELO family. Requires Mg(2+) as cofactor. Mn(2+) is required as a cofactor.

The catalysed reaction is L-seryl-[protein] + ATP = 3-O-(5'-adenylyl)-L-seryl-[protein] + diphosphate. It catalyses the reaction L-threonyl-[protein] + ATP = 3-O-(5'-adenylyl)-L-threonyl-[protein] + diphosphate. It carries out the reaction L-tyrosyl-[protein] + ATP = O-(5'-adenylyl)-L-tyrosyl-[protein] + diphosphate. The enzyme catalyses L-histidyl-[protein] + UTP = N(tele)-(5'-uridylyl)-L-histidyl-[protein] + diphosphate. The catalysed reaction is L-seryl-[protein] + UTP = O-(5'-uridylyl)-L-seryl-[protein] + diphosphate. It catalyses the reaction L-tyrosyl-[protein] + UTP = O-(5'-uridylyl)-L-tyrosyl-[protein] + diphosphate. Nucleotidyltransferase involved in the post-translational modification of proteins. It can catalyze the addition of adenosine monophosphate (AMP) or uridine monophosphate (UMP) to a protein, resulting in modifications known as AMPylation and UMPylation. The sequence is that of Protein nucleotidyltransferase YdiU from Aeromonas salmonicida (strain A449).